A 515-amino-acid chain; its full sequence is Sterol 14-alpha demethylase cyp51A (515 aa).

A helical transmembrane segment spans residues 7-29 (LTAYMAVAVLTAILLNVVYQLFF). Asn33 and Asn269 each carry an N-linked (GlcNAc...) asparagine glycan. Cys454 contacts heme. An N-linked (GlcNAc...) asparagine glycan is attached at Asn512.

Belongs to the cytochrome P450 family. Requires heme as cofactor.

The protein localises to the endoplasmic reticulum membrane. The catalysed reaction is a 14alpha-methyl steroid + 3 reduced [NADPH--hemoprotein reductase] + 3 O2 = a Delta(14) steroid + formate + 3 oxidized [NADPH--hemoprotein reductase] + 4 H2O + 4 H(+). It carries out the reaction a 14alpha-methyl steroid + reduced [NADPH--hemoprotein reductase] + O2 = a 14alpha-hydroxymethyl steroid + oxidized [NADPH--hemoprotein reductase] + H2O + H(+). It catalyses the reaction a 14alpha-hydroxymethyl steroid + reduced [NADPH--hemoprotein reductase] + O2 = a 14alpha-formyl steroid + oxidized [NADPH--hemoprotein reductase] + 2 H2O + H(+). The enzyme catalyses a 14alpha-formyl steroid + reduced [NADPH--hemoprotein reductase] + O2 = a Delta(14) steroid + formate + oxidized [NADPH--hemoprotein reductase] + H2O + 2 H(+). The catalysed reaction is lanosterol + 3 reduced [NADPH--hemoprotein reductase] + 3 O2 = 4,4-dimethyl-5alpha-cholesta-8,14,24-trien-3beta-ol + formate + 3 oxidized [NADPH--hemoprotein reductase] + 4 H2O + 4 H(+). It carries out the reaction lanosterol + reduced [NADPH--hemoprotein reductase] + O2 = 32-hydroxylanosterol + oxidized [NADPH--hemoprotein reductase] + H2O + H(+). It catalyses the reaction 32-hydroxylanosterol + reduced [NADPH--hemoprotein reductase] + O2 = 32-oxolanosterol + oxidized [NADPH--hemoprotein reductase] + 2 H2O + H(+). The enzyme catalyses 32-oxolanosterol + reduced [NADPH--hemoprotein reductase] + O2 = 4,4-dimethyl-5alpha-cholesta-8,14,24-trien-3beta-ol + formate + oxidized [NADPH--hemoprotein reductase] + H2O + 2 H(+). The catalysed reaction is eburicol + 3 reduced [NADPH--hemoprotein reductase] + 3 O2 = 14-demethyleburicol + formate + 3 oxidized [NADPH--hemoprotein reductase] + 4 H2O + 4 H(+). It carries out the reaction eburicol + reduced [NADPH--hemoprotein reductase] + O2 = 32-hydroxyeburicol + oxidized [NADPH--hemoprotein reductase] + H2O + H(+). It catalyses the reaction 32-hydroxyeburicol + reduced [NADPH--hemoprotein reductase] + O2 = 32-oxoeburicol + oxidized [NADPH--hemoprotein reductase] + 2 H2O + H(+). The enzyme catalyses 32-oxoeburicol + reduced [NADPH--hemoprotein reductase] + O2 = 14-demethyleburicol + formate + oxidized [NADPH--hemoprotein reductase] + H2O + 2 H(+). Its pathway is steroid metabolism; ergosterol biosynthesis. With respect to regulation, the sterol 14-alpha demethylase activity is inhibited by azole compounds. Activity is inhibited by the novel and long-acting fungicidal azole, PC1244. Its function is as follows. Sterol 14alpha-demethylase, encoded by cyp51A and cyp51B, that plays a critical role in the third module of ergosterol biosynthesis pathway, being ergosterol the major sterol component in fungal membranes that participates in a variety of functions. The third module or late pathway involves the ergosterol synthesis itself through consecutive reactions that mainly occur in the endoplasmic reticulum (ER) membrane. In filamentous fungi, during the initial step of this module, lanosterol (lanosta-8,24-dien-3beta-ol) can be metabolized to eburicol. Sterol 14alpha-demethylase catalyzes the three-step oxidative removal of the 14alpha-methyl group (C-32) of both these sterols in the form of formate, and converts eburicol and lanosterol to 14-demethyleburicol (4,4,24-trimethylergosta-8,14,24(28)-trienol) and 4,4-dimethyl-5alpha-cholesta-8,14,24-trien-3beta-ol, respectively, which are further metabolized by other enzymes in the pathway to ergosterol. Can also use substrates not intrinsic to fungi, such as 24,25-dihydrolanosterol (DHL), producing 4,4'-dimethyl-8,14-cholestadien-3-beta-ol, but at lower rates than the endogenous substrates. In terms of biological role, as a target of azole drugs, plays a crucial role in azole susceptibility. The sequence is that of Sterol 14-alpha demethylase cyp51A from Aspergillus fumigatus (strain ATCC MYA-4609 / CBS 101355 / FGSC A1100 / Af293) (Neosartorya fumigata).